A 217-amino-acid chain; its full sequence is Adenylate kinase (217 aa).

An ATP-binding site is contributed by 10–15 (GIGKGT). An NMP region spans residues 30–59 (STGDIFRKNFKENTELGTLSKKFIAQGLLV). AMP is bound by residues T31, R36, 57–59 (LLV), 85–88 (GFPR), and Q92. The segment at 126-163 (GRRICPECGKVYHIEKIPPKNPGICDKDQKTLIQREDD) is LID. R127 serves as a coordination point for ATP. The Zn(2+) site is built by C130 and C133. Residue 136 to 137 (VY) coordinates ATP. Zn(2+)-binding residues include C150 and D153. R160 and R171 together coordinate AMP. Q199 contacts ATP.

This sequence belongs to the adenylate kinase family. In terms of assembly, monomer.

It localises to the cytoplasm. It carries out the reaction AMP + ATP = 2 ADP. Its pathway is purine metabolism; AMP biosynthesis via salvage pathway; AMP from ADP: step 1/1. Functionally, catalyzes the reversible transfer of the terminal phosphate group between ATP and AMP. Plays an important role in cellular energy homeostasis and in adenine nucleotide metabolism. In Aster yellows witches'-broom phytoplasma (strain AYWB), this protein is Adenylate kinase.